Here is a 369-residue protein sequence, read N- to C-terminus: Protein FAM187B (369 aa).

Residues 1-17 form the signal peptide; the sequence is MPPMLWLLLNFAAPALG. Residues 18–333 are Extracellular-facing; that stretch reads FYFSISCPSG…PGRADSVLKG (316 aa). N-linked (GlcNAc...) asparagine glycosylation is found at Asn45, Asn68, and Asn130. A helical membrane pass occupies residues 334–354; that stretch reads LKLVLLVGTVLVLLGALLKFI. The Cytoplasmic segment spans residues 355–369; that stretch reads RPSPGKRSKQVLMVK.

The protein belongs to the FAM187 family.

The protein localises to the membrane. This chain is Protein FAM187B (FAM187B), found in Macaca fascicularis (Crab-eating macaque).